We begin with the raw amino-acid sequence, 829 residues long: MTERIRARGPRSSSVNSVPLILDIEDFKGDFSFDALFGNLVNDLLPSFLDEEADSGDGHGNIAGVDGLTNGHLRGQSAPLSSAPFFPEVDGLLSLFKDACKELVDLRKQVDGRLNTLKKEVSTQDSKHRKTLTEIEKGVDGLFESFARLDGRISSVGQTAAKIGDHLQSADAQRETASQTIDLIKYLMEFNGSPGDLMELSALFSDDSRVAEAASIAQKLRSFAEEDIGRQGASTAAGNATPGRGLEVAVANLQDYCNELENRLLSRFDAASQRRDLSTMSECAKILSQFNRGTSAMQHYVATRPMFIDVEVMNSDIRLVLGDHGSQPSPSNVARGLSALFKEITDTVRKEAATITAVFPTPNEVMAILVQRVLEQRVTGILDKILAKPSLMSPPPVQEGGLLLYLRMLAVAYERTQELAKDLRAVGCGDLDVEDLTESLFSSHKDEYPEHERASLKQLYQAKMEELRAESQQVSESSGTIGRSKGASISSSLQQISVTFVTEFVRWNEEAITRCTLFSSQPATLAANVKAIFTCLLDQVSVYITEGLERARDSLSEAAALRERFVLGTSVSRRVAAAAASAAEAAAAAGESSFKSFMVAVQRCGSSVAIVQQYFANSISRLLLPVDGAHAASCEEMSTALSKAEAAAYKGLQQCIETVMAEVDRLLSSEQKSTDYRSPDDGIASDHRPTNACIRVVAYLSRVLESAFTALEGLNKQAFLTELGNRLEKLLLTHWQKFTFNPSGGLRLKRDLNEYVGFVKSFGAPSVDEKFELLGIIANVFIVAPDSLPTLFEGSPSIRKDAQRFIQLREDYKSAKLATKLSSLWPSLS.

Residues 244–266 (RGLEVAVANLQDYCNELENRLLS) are a coiled coil.

This sequence belongs to the SEC10 family. As to quaternary structure, the exocyst complex is composed of SEC3, SEC5, SEC6, SEC8, SEC10, EXO70A1 and EXO84B. Interacts with EXO84B. Binds to EXO70E2. In terms of tissue distribution, expressed in seedlings, roots, leaves and flowers.

It is found in the cytoplasm. It localises to the cytosol. The protein resides in the secreted. Its subcellular location is the extracellular exosome. In terms of biological role, component of the exocyst complex involved in the docking of exocytic vesicles with fusion sites on the plasma membrane during regulated or polarized secretion. Involved in polarized cell growth and organ morphogenesis. During cytokinesis, involved in cell plate initiation, cell plate maturation and formation of new primary cell wall. The protein is Exocyst complex component SEC10b of Arabidopsis thaliana (Mouse-ear cress).